We begin with the raw amino-acid sequence, 698 residues long: Probable metal-nicotianamine transporter YSL17 (698 aa).

The segment at M1 to L36 is disordered. Helical transmembrane passes span V43–M63, L67–A87, I114–G134, I157–P177, V216–F236, M277–I297, V322–V342, W395–L415, V424–V444, S463–V483, V511–F531, L567–A587, I607–C627, and L644–S664.

This sequence belongs to the YSL (TC 2.A.67.2) family. As to expression, expressed at low levels in roots.

The protein resides in the membrane. Its function is as follows. May be involved in the transport of nicotianamine-chelated metals. This chain is Probable metal-nicotianamine transporter YSL17 (YSL17), found in Oryza sativa subsp. japonica (Rice).